Reading from the N-terminus, the 376-residue chain is ATP synthase gamma chain, chloroplastic (376 aa).

The N-terminal 52 residues, 1 to 52, are a transit peptide targeting the chloroplast; sequence MSCSNVTMLVSSKPSLPDASNLSFRSAFNPFQLPSQNSSSSCTPSRPTSIQC. The active site involves C133. Residues C250 and C256 are joined by a disulfide bond.

Belongs to the ATPase gamma chain family. F-type ATPases have 2 components, CF(1) - the catalytic core - and CF(0) - the membrane proton channel. CF(1) has five subunits: alpha(3), beta(3), gamma(1), delta(1), epsilon(1). CF(0) has four main subunits: a, b, b' and c.

The protein resides in the plastid. Its subcellular location is the chloroplast thylakoid membrane. Produces ATP from ADP in the presence of a proton gradient across the membrane. The gamma chain is believed to be important in regulating ATPase activity and the flow of protons through the CF(0) complex. This is ATP synthase gamma chain, chloroplastic (ATPC) from Pisum sativum (Garden pea).